Here is a 396-residue protein sequence, read N- to C-terminus: Elongation factor Tu (396 aa).

The tr-type G domain maps to 10–206 (KPHVNVGTIG…ALDNYIPLPE (197 aa)). Positions 19–26 (GHVDHGKT) are G1. 19–26 (GHVDHGKT) contributes to the GTP binding site. A Mg(2+)-binding site is contributed by Thr26. Positions 60–64 (GITIN) are G2. The segment at 81–84 (DCPG) is G3. Residues 81 to 85 (DCPGH) and 136 to 139 (NKCD) each bind GTP. Positions 136 to 139 (NKCD) are G4. The segment at 174-176 (SAK) is G5.

This sequence belongs to the TRAFAC class translation factor GTPase superfamily. Classic translation factor GTPase family. EF-Tu/EF-1A subfamily. In terms of assembly, monomer.

The protein resides in the cytoplasm. It carries out the reaction GTP + H2O = GDP + phosphate + H(+). Its function is as follows. GTP hydrolase that promotes the GTP-dependent binding of aminoacyl-tRNA to the A-site of ribosomes during protein biosynthesis. The sequence is that of Elongation factor Tu from Polaromonas naphthalenivorans (strain CJ2).